Consider the following 359-residue polypeptide: NADH-quinone oxidoreductase subunit H (359 aa).

Transmembrane regions (helical) follow at residues I19–L39, F94–L114, V127–G147, I175–M195, F202–I222, F255–I275, V301–L321, and C337–I357.

Belongs to the complex I subunit 1 family. NDH-1 is composed of 14 different subunits. Subunits NuoA, H, J, K, L, M, N constitute the membrane sector of the complex.

The protein localises to the cell inner membrane. It catalyses the reaction a quinone + NADH + 5 H(+)(in) = a quinol + NAD(+) + 4 H(+)(out). In terms of biological role, NDH-1 shuttles electrons from NADH, via FMN and iron-sulfur (Fe-S) centers, to quinones in the respiratory chain. The immediate electron acceptor for the enzyme in this species is believed to be ubiquinone. Couples the redox reaction to proton translocation (for every two electrons transferred, four hydrogen ions are translocated across the cytoplasmic membrane), and thus conserves the redox energy in a proton gradient. This subunit may bind ubiquinone. This is NADH-quinone oxidoreductase subunit H from Chlorobaculum tepidum (strain ATCC 49652 / DSM 12025 / NBRC 103806 / TLS) (Chlorobium tepidum).